The primary structure comprises 268 residues: Imidazole glycerol phosphate synthase subunit HisF (268 aa).

Catalysis depends on residues aspartate 12 and aspartate 131.

This sequence belongs to the HisA/HisF family. As to quaternary structure, heterodimer of HisH and HisF.

The protein resides in the cytoplasm. The enzyme catalyses 5-[(5-phospho-1-deoxy-D-ribulos-1-ylimino)methylamino]-1-(5-phospho-beta-D-ribosyl)imidazole-4-carboxamide + L-glutamine = D-erythro-1-(imidazol-4-yl)glycerol 3-phosphate + 5-amino-1-(5-phospho-beta-D-ribosyl)imidazole-4-carboxamide + L-glutamate + H(+). The protein operates within amino-acid biosynthesis; L-histidine biosynthesis; L-histidine from 5-phospho-alpha-D-ribose 1-diphosphate: step 5/9. Its function is as follows. IGPS catalyzes the conversion of PRFAR and glutamine to IGP, AICAR and glutamate. The HisF subunit catalyzes the cyclization activity that produces IGP and AICAR from PRFAR using the ammonia provided by the HisH subunit. In Methanosphaerula palustris (strain ATCC BAA-1556 / DSM 19958 / E1-9c), this protein is Imidazole glycerol phosphate synthase subunit HisF.